Consider the following 93-residue polypeptide: Small ribosomal subunit protein uS19c (93 aa).

It belongs to the universal ribosomal protein uS19 family.

Its subcellular location is the plastid. It is found in the chloroplast. In terms of biological role, protein S19 forms a complex with S13 that binds strongly to the 16S ribosomal RNA. This Brachypodium distachyon (Purple false brome) protein is Small ribosomal subunit protein uS19c.